Here is a 242-residue protein sequence, read N- to C-terminus: Probable septum site-determining protein MinC (242 aa).

The protein belongs to the MinC family. As to quaternary structure, interacts with MinD and FtsZ.

Functionally, cell division inhibitor that blocks the formation of polar Z ring septums. Rapidly oscillates between the poles of the cell to destabilize FtsZ filaments that have formed before they mature into polar Z rings. Prevents FtsZ polymerization. This Brucella anthropi (strain ATCC 49188 / DSM 6882 / CCUG 24695 / JCM 21032 / LMG 3331 / NBRC 15819 / NCTC 12168 / Alc 37) (Ochrobactrum anthropi) protein is Probable septum site-determining protein MinC.